A 280-amino-acid chain; its full sequence is Orotidine 5'-phosphate decarboxylase (280 aa).

Residue K96 is the Proton donor of the active site.

The protein belongs to the OMP decarboxylase family. Type 2 subfamily.

The catalysed reaction is orotidine 5'-phosphate + H(+) = UMP + CO2. It functions in the pathway pyrimidine metabolism; UMP biosynthesis via de novo pathway; UMP from orotate: step 2/2. The chain is Orotidine 5'-phosphate decarboxylase from Parabacteroides distasonis (strain ATCC 8503 / DSM 20701 / CIP 104284 / JCM 5825 / NCTC 11152).